A 90-amino-acid chain; its full sequence is Protein S100-A6 (90 aa).

2 consecutive EF-hand domains span residues leucine 12 to lysine 47 and leucine 48 to isoleucine 83. Residues threonine 28 and glutamate 33 each contribute to the Ca(2+) site. Position 40 is an N6-acetyllysine (lysine 40). A Phosphoserine modification is found at serine 46. Lysine 47 is subject to N6-acetyllysine; alternate. Lysine 47 is modified (N6-succinyllysine; alternate). Residues aspartate 61, asparagine 63, aspartate 65, glutamate 67, and glutamate 72 each coordinate Ca(2+).

This sequence belongs to the S-100 family. As to quaternary structure, homodimer; head to tail assembly of 2 subunits. Interacts with CACYBP in a calcium-dependent manner. Interacts with ANXA2 and ANXA11 (via N-terminus). Interacts with SUGT1. Interacts with TP53; has higher affinity for TP53 that is phosphorylated on its N-terminal domain, and lower affinity for TP53 that is phosphorylated on its C-terminal domain. Interacts with tropomyosin. Interacts with FKBP4. Interacts with PPP5C (via TPR repeats); the interaction is calcium-dependent and modulates PPP5C activity. Interacts with TPPP; this interaction inhibits TPPP dimerization.

It is found in the nucleus envelope. The protein localises to the cytoplasm. It localises to the cell membrane. Its function is as follows. May function as calcium sensor and modulator, contributing to cellular calcium signaling. May function by interacting with other proteins, such as TPR-containing proteins, and indirectly play a role in many physiological processes such as the reorganization of the actin cytoskeleton and in cell motility. Binds 2 calcium ions. Calcium binding is cooperative. This is Protein S100-A6 (S100A6) from Oryctolagus cuniculus (Rabbit).